A 305-amino-acid polypeptide reads, in one-letter code: Aurora/IPL1-related protein kinase 2 (305 aa).

A Protein kinase domain is found at 30-280 (FEIGRPLGKG…LEQVKEHYWI (251 aa)). Residues 36–44 (LGKGKFGSV) and K59 contribute to the ATP site. Residue D153 is the Proton acceptor of the active site.

Belongs to the protein kinase superfamily. Ser/Thr protein kinase family. Aurora subfamily. As to quaternary structure, component of the CPC complex which consists of icp-1; csc-1; bir-1 and air-2. Within the complex, interacts with icp-1; csc-1 and bir-1. Interacts with zen-4. Interacts with tlk-1 and bmk-1. Phosphorylated. Increased phosphorylation upon chromatin obstructions at anaphase.

The protein resides in the cytoplasm. Its subcellular location is the cytoskeleton. It localises to the chromosome. It is found in the midbody. The protein localises to the spindle. The enzyme catalyses L-seryl-[protein] + ATP = O-phospho-L-seryl-[protein] + ADP + H(+). It catalyses the reaction L-threonyl-[protein] + ATP = O-phospho-L-threonyl-[protein] + ADP + H(+). Its function is as follows. Serine/threonine-protein kinase component of the chromosomal passenger complex (CPC), a complex that acts as a key regulator of chromosome segregation and cytokinesis. The CPC complex has essential functions at the centromere in ensuring correct chromosome alignment and segregation. Required for histone H3 phosphorylation during segregation of homologous chromosomes in meiosis and mitosis. Required for histone H3 'Ser-10' phosphorylation. Phosphorylates tlk-1 at 'Ser-634', which enhances its activity. Phosphorylates zen-4 at 'Ser-680'. Required for the recruitment of bub-1 to the ring-shaped domain between chromosomes during meiotic anaphase I. Also required for the localization of the condensin I complex subunit smc-4 to mitotic chromosomes. Acts at the spindle midzone and the midbody to prevent cleavage furrow regression upon chromatin obstructions during cytokinesis. This chain is Aurora/IPL1-related protein kinase 2, found in Caenorhabditis elegans.